The following is a 175-amino-acid chain: Endoribonuclease YbeY (175 aa).

The Zn(2+) site is built by histidine 137, histidine 141, and histidine 147.

The protein belongs to the endoribonuclease YbeY family. Zn(2+) is required as a cofactor.

The protein localises to the cytoplasm. In terms of biological role, single strand-specific metallo-endoribonuclease involved in late-stage 70S ribosome quality control and in maturation of the 3' terminus of the 16S rRNA. This chain is Endoribonuclease YbeY, found in Burkholderia ambifaria (strain ATCC BAA-244 / DSM 16087 / CCUG 44356 / LMG 19182 / AMMD) (Burkholderia cepacia (strain AMMD)).